A 320-amino-acid polypeptide reads, in one-letter code: Cytochrome f (320 aa).

The N-terminal stretch at 1-35 (MQTRKTLSWIKEEITRSISVSLMIYIITGAYISNA) is a signal peptide. Positions 36, 56, 59, and 60 each coordinate heme. A helical transmembrane segment spans residues 286–306 (VQGLLFFLASVILAQIFLVLK).

This sequence belongs to the cytochrome f family. In terms of assembly, the 4 large subunits of the cytochrome b6-f complex are cytochrome b6, subunit IV (17 kDa polypeptide, petD), cytochrome f and the Rieske protein, while the 4 small subunits are PetG, PetL, PetM and PetN. The complex functions as a dimer. It depends on heme as a cofactor.

It is found in the plastid. The protein localises to the chloroplast thylakoid membrane. In terms of biological role, component of the cytochrome b6-f complex, which mediates electron transfer between photosystem II (PSII) and photosystem I (PSI), cyclic electron flow around PSI, and state transitions. In Populus trichocarpa (Western balsam poplar), this protein is Cytochrome f.